We begin with the raw amino-acid sequence, 83 residues long: Arminin 3b (83 aa).

A signal peptide spans 1–18; the sequence is MKIVFAILFLTFIALTYA. Positions 19–57 are excised as a propeptide; sequence RSFEDLKEEIKNEIEKEIFDDLEEESDELDNNVKKFNDA. At Ser80 the chain carries Serine amide.

This sequence belongs to the arminin family. As to expression, expressed in entodermal epithelium along the body column.

It is found in the secreted. It localises to the target cell membrane. Functionally, antimicrobial peptide with a broad-spectrum antimicrobial activity. Keeps its antibacterial activity under a wide range of salt concentrations that mimic physiological conditions of human blood, which is surprising, since Hydra is an obligate freshwater animal with nearly no salt tolerance. Does not affect red blood cells. This Hydra vulgaris (Hydra) protein is Arminin 3b.